The sequence spans 188 residues: Protein GrpE (188 aa).

The segment covering 1–22 (MEENKQNQNLNTEETTEQQTEA) has biased composition (low complexity). The disordered stretch occupies residues 1–26 (MEENKQNQNLNTEETTEQQTEAETVE).

This sequence belongs to the GrpE family. In terms of assembly, homodimer.

It is found in the cytoplasm. Its function is as follows. Participates actively in the response to hyperosmotic and heat shock by preventing the aggregation of stress-denatured proteins, in association with DnaK and GrpE. It is the nucleotide exchange factor for DnaK and may function as a thermosensor. Unfolded proteins bind initially to DnaJ; upon interaction with the DnaJ-bound protein, DnaK hydrolyzes its bound ATP, resulting in the formation of a stable complex. GrpE releases ADP from DnaK; ATP binding to DnaK triggers the release of the substrate protein, thus completing the reaction cycle. Several rounds of ATP-dependent interactions between DnaJ, DnaK and GrpE are required for fully efficient folding. The polypeptide is Protein GrpE (Exiguobacterium sibiricum (strain DSM 17290 / CCUG 55495 / CIP 109462 / JCM 13490 / 255-15)).